Reading from the N-terminus, the 304-residue chain is Glycosyltransferase AglE (304 aa).

Belongs to the glycosyltransferase 2 family.

It is found in the cell membrane. It functions in the pathway cell surface structure biogenesis; S-layer biogenesis. Involved in the assembly of a N-linked pentasaccharide that decorates the S-layer glycoprotein and flagellins. Catalyzes the addition to the dolichol phosphate carrier of the hexuronic acid found at position 4 of the pentasaccharide. This Haloferax volcanii (strain ATCC 29605 / DSM 3757 / JCM 8879 / NBRC 14742 / NCIMB 2012 / VKM B-1768 / DS2) (Halobacterium volcanii) protein is Glycosyltransferase AglE (aglE).